A 290-amino-acid polypeptide reads, in one-letter code: 33 kDa chaperonin (290 aa).

2 disulfide bridges follow: C235-C237 and C268-C271.

Belongs to the HSP33 family. In terms of processing, under oxidizing conditions two disulfide bonds are formed involving the reactive cysteines. Under reducing conditions zinc is bound to the reactive cysteines and the protein is inactive.

The protein resides in the cytoplasm. Functionally, redox regulated molecular chaperone. Protects both thermally unfolding and oxidatively damaged proteins from irreversible aggregation. Plays an important role in the bacterial defense system toward oxidative stress. The chain is 33 kDa chaperonin from Streptococcus pyogenes serotype M6 (strain ATCC BAA-946 / MGAS10394).